Consider the following 305-residue polypeptide: Small ribosomal subunit protein uS3 (305 aa).

The region spanning 17–86 is the KH type-2 domain; the sequence is IDEFFSEELS…DPQVDVQEVD (70 aa). 2 stretches are compositionally biased toward acidic residues: residues 207–262 and 272–305; these read EPEG…EAET and AAEEPDEALDEDVEAEAEELLDEMEDETTDEEET. Positions 207 to 305 are disordered; it reads EPEGDVEELL…EDETTDEEET (99 aa).

The protein belongs to the universal ribosomal protein uS3 family. Part of the 30S ribosomal subunit.

Binds the lower part of the 30S subunit head. This Natronomonas pharaonis (strain ATCC 35678 / DSM 2160 / CIP 103997 / JCM 8858 / NBRC 14720 / NCIMB 2260 / Gabara) (Halobacterium pharaonis) protein is Small ribosomal subunit protein uS3.